Consider the following 303-residue polypeptide: BAG family molecular chaperone regulator 3 (303 aa).

The segment covering methionine 1–serine 11 has biased composition (polar residues). A disordered region spans residues methionine 1–glycine 27. The Ubiquitin-like domain occupies phenylalanine 45–glutamine 119. Positions serine 138–lysine 216 constitute a BAG domain. The disordered stretch occupies residues valine 249–proline 268. A compositionally biased stretch (polar residues) spans asparagine 258–threonine 267. Serine 263 is modified (phosphoserine).

Binds to the ATPase domain of HSP70/HSC70 chaperones. Interacts with HSP70-1.

In terms of biological role, co-chaperone that regulates diverse cellular pathways, such as programmed cell death and stress responses. The polypeptide is BAG family molecular chaperone regulator 3 (BAG3) (Arabidopsis thaliana (Mouse-ear cress)).